Reading from the N-terminus, the 228-residue chain is CD9 antigen (228 aa).

Over 1 to 12 the chain is Cytoplasmic; it reads MPVKGGTKCIKY. Residue Cys9 is the site of S-palmitoyl cysteine attachment. Residues 13–33 traverse the membrane as a helical segment; that stretch reads LLFGFNFIFWLAGIAVLAIGL. Topologically, residues 34 to 55 are extracellular; it reads WLRFDSQTKSIFEQETNNNNSS. N-linked (GlcNAc...) asparagine glycans are attached at residues Asn52 and Asn53. The chain crosses the membrane as a helical span at residues 56–76; the sequence is FYTGVYILIGAGALMMLVGFL. The Cytoplasmic segment spans residues 77–87; the sequence is GCCGAVQESQC. Residues Cys78, Cys79, and Cys87 are each lipidated (S-palmitoyl cysteine). The helical transmembrane segment at 88 to 111 threads the bilayer; that stretch reads MLGLFFGFLLVIFAIEIAAAIWGY. At 112–195 the chain is on the extracellular side; that stretch reads SHKDEVIKEV…KEVFDNKFHI (84 aa). 2 cysteine pairs are disulfide-bonded: Cys152–Cys181 and Cys153–Cys167. The helical transmembrane segment at 196-221 threads the bilayer; the sequence is IGAVGIGIAVVMIFGMIFSMILCCAI. 2 S-palmitoyl cysteine lipidation sites follow: Cys218 and Cys219. Over 222–228 the chain is Cytoplasmic; sequence RRNREMV.

It belongs to the tetraspanin (TM4SF) family. In terms of assembly, forms both disulfide-linked homodimers and higher homooligomers as well as heterooligomers with other members of the tetraspanin family. Interacts (via the second extracellular domain) with integrin ITGAV:ITGB3. Interacts with integrin ITGA6:ITGB1; interaction takes place in oocytes and is involved in sperm-egg fusion. Part of integrin-tetraspanin complexes composed of CD81, beta-1 and beta-2 integrins in the membrane of monocyte/macrophages. Interacts with CD63; identified in a complex with CD63 and ITGB3. Associates with CR2/CD21 and with PTGFRN/CD9P1. Part of a complex composed of CD9, CD81, PTGFRN and IGSF8. Interacts directly with IGSF8. Interacts with PDPN; this interaction is homophilic and attenuates platelet aggregation and pulmonary metastasis induced by PDPN. Interacts (on T cell side) with CD81 at immunological synapses between antigen-presenting cells and T cells. Palmitoylated at a low, basal level in unstimulated platelets. The level of palmitoylation increases when platelets are activated by thrombin (in vitro). The protein exists in three forms with molecular masses between 22 and 27 kDa, and is known to carry covalently linked fatty acids. Palmitoylation by ZDHHC2 regulates CD9 expression, association with other tetraspanin family proteins and function in cell adhesion.

It localises to the cell membrane. Its subcellular location is the membrane. It is found in the secreted. The protein localises to the extracellular exosome. Functionally, integral membrane protein associated with integrins, which regulates different processes, such as sperm-egg fusion, platelet activation and aggregation, and cell adhesion. Present at the cell surface of oocytes and plays a key role in sperm-egg fusion, possibly by organizing multiprotein complexes and the morphology of the membrane required for the fusion. In myoblasts, associates with CD81 and PTGFRN and inhibits myotube fusion during muscle regeneration. In macrophages, associates with CD81 and beta-1 and beta-2 integrins, and prevents macrophage fusion into multinucleated giant cells specialized in ingesting complement-opsonized large particles. Also prevents the fusion between mononuclear cell progenitors into osteoclasts in charge of bone resorption. Acts as a receptor for PSG17. Involved in platelet activation and aggregation. Regulates paranodal junction formation. Involved in cell adhesion, cell motility and tumor metastasis. This is CD9 antigen from Chlorocebus aethiops (Green monkey).